A 290-amino-acid chain; its full sequence is Elongation factor Ts, mitochondrial 1 (290 aa).

Belongs to the EF-Ts family.

The protein resides in the mitochondrion. In terms of biological role, associates with the EF-Tu.GDP complex and induces the exchange of GDP to GTP. It remains bound to the aminoacyl-tRNA.EF-Tu.GTP complex up to the GTP hydrolysis stage on the ribosome. This Postia placenta (strain ATCC 44394 / Madison 698-R) (Brown rot fungus) protein is Elongation factor Ts, mitochondrial 1.